The primary structure comprises 615 residues: Melanopsin-B (615 aa).

The Extracellular segment spans residues 1 to 19; the sequence is MDMDRGFYRKVDVPDHAHY. A helical membrane pass occupies residues 20–40; that stretch reads VIAFFVLIIGVVGVTGNALVM. At 41 to 56 the chain is on the cytoplasmic side; that stretch reads YAFLCNKKLRTPPNYF. A helical transmembrane segment spans residues 57-77; that stretch reads IMNLAVSDFLMAITQSPIFFI. Topologically, residues 78–93 are extracellular; that stretch reads NSLFKEWIFGETGCRM. Cysteines 91 and 169 form a disulfide. The helical transmembrane segment at 94 to 114 threads the bilayer; sequence YAFCGALFGITSMINLLAISL. Residues 115–136 lie on the Cytoplasmic side of the membrane; that stretch reads DRYIVITKPPQAIRWVSGRRTM. Residues 137-157 form a helical membrane-spanning segment; that stretch reads VVILLVWLYSLAWSLAPLLGW. Residues 158 to 189 lie on the Extracellular side of the membrane; that stretch reads SSYIPEGLMTSCTWDYVTSTPANKGYTLMLCC. The chain crosses the membrane as a helical span at residues 190–210; the sequence is FVFFIPLGIISYCYLCMFLAI. Residues 211 to 244 lie on the Cytoplasmic side of the membrane; the sequence is RSAGREIERLGTQVRKSTLMQQQTIKTEWKLTKV. The chain crosses the membrane as a helical span at residues 245 to 265; that stretch reads AFVVIIVYVHSWSPYACVTLI. The Extracellular segment spans residues 266-279; that stretch reads AWAGYGSHLSPYSK. The helical transmembrane segment at 280-300 threads the bilayer; the sequence is AVPAVIAKASAIYNPFIYAII. K287 is subject to N6-(retinylidene)lysine. Topologically, residues 301–615 are cytoplasmic; that stretch reads HSKYRDTLAE…RNLEESFMAL (315 aa). Disordered regions lie at residues 390 to 420 and 465 to 502; these read LGRS…TVAD and NKHP…QNHP. Positions 401–415 are enriched in polar residues; sequence AQQNRQTRSSDTLEQ. Residues 469–478 show a composition bias toward basic residues; it reads NNNHKNHNNR.

The protein belongs to the G-protein coupled receptor 1 family. Opsin subfamily. Expressed in the inner nuclear layer of the retina, possibly in amacrine and ganglion cells. Expressed in a subpopulation of neurons in the dorsal habenula.

The protein resides in the cell membrane. In terms of biological role, photoreceptor implicated in non-image-forming responses to light. This Gadus morhua (Atlantic cod) protein is Melanopsin-B (opn4b).